The following is a 128-amino-acid chain: Large ribosomal subunit protein bL21 (128 aa).

A disordered region spans residues 104–128; it reads GKKPSVGPRPKRVKAEPAPAADAAE. The span at 119-128 shows a compositional bias: low complexity; it reads EPAPAADAAE.

The protein belongs to the bacterial ribosomal protein bL21 family. As to quaternary structure, part of the 50S ribosomal subunit. Contacts protein L20.

Its function is as follows. This protein binds to 23S rRNA in the presence of protein L20. The polypeptide is Large ribosomal subunit protein bL21 (Rhodopseudomonas palustris (strain BisB5)).